The following is a 210-amino-acid chain: Actin-related protein 3C (210 aa).

The signal sequence occupies residues 1–21; the sequence is MFESFNVPGLYIAVQAVLALA.

The protein belongs to the actin family. In terms of tissue distribution, expressed in kidney, stomach, spleen, bone marrow, uterus, testis, placenta, skeletal muscle, mammary gland, lung, fetal liver, and fetal kidney, but not detected in small intestine, brain, and thymus. Expressed in low-metastatic lung adenocarcinoma cells but not in high-metastatic ones.

In terms of biological role, may play a role in the suppression of metastatic potential in lung adenoma carcinoma cells. The protein is Actin-related protein 3C (ACTR3C) of Homo sapiens (Human).